Consider the following 156-residue polypeptide: Ribosome maturation factor RimP (156 aa).

Belongs to the RimP family.

It localises to the cytoplasm. Required for maturation of 30S ribosomal subunits. The sequence is that of Ribosome maturation factor RimP from Lysinibacillus sphaericus (strain C3-41).